We begin with the raw amino-acid sequence, 336 residues long: Succinylglutamate desuccinylase (336 aa).

Histidine 59, glutamate 62, and histidine 151 together coordinate Zn(2+). Glutamate 215 is an active-site residue.

The protein belongs to the AspA/AstE family. Succinylglutamate desuccinylase subfamily. Zn(2+) is required as a cofactor.

The enzyme catalyses N-succinyl-L-glutamate + H2O = L-glutamate + succinate. It functions in the pathway amino-acid degradation; L-arginine degradation via AST pathway; L-glutamate and succinate from L-arginine: step 5/5. Its function is as follows. Transforms N(2)-succinylglutamate into succinate and glutamate. The sequence is that of Succinylglutamate desuccinylase from Pseudomonas fluorescens (strain Pf0-1).